The chain runs to 596 residues: Serine/threonine-protein kinase PknH (596 aa).

Over 1–373 (MSDAQDSRVG…QTPRKTNPWP (373 aa)) the chain is Cytoplasmic. In terms of domain architecture, Protein kinase spans 16 to 276 (YHLKRLLGRG…DLALAAHEAL (261 aa)). Residues 22–30 (LGRGGMGEV) and Lys45 contribute to the ATP site. The active-site Proton acceptor is Asp139. Thr170 bears the Phosphothreonine mark. A disordered region spans residues 292–368 (QESTLPGTAA…PSPWAQTPRK (77 aa)). Pro residues predominate over residues 307–318 (PTMPTVTPPPIQ). Residues 374–394 (LVAGAAAVVLVLVLGAIGIWI) form a helical membrane-spanning segment. The Extracellular portion of the chain corresponds to 395 to 596 (ANRPKPVQPP…AKIVDKVNKE (202 aa)).

Belongs to the protein kinase superfamily. Ser/Thr protein kinase family. In terms of processing, autophosphorylated on threonine and serine residues.

It is found in the cell membrane. It carries out the reaction L-seryl-[protein] + ATP = O-phospho-L-seryl-[protein] + ADP + H(+). The enzyme catalyses L-threonyl-[protein] + ATP = O-phospho-L-threonyl-[protein] + ADP + H(+). In Mycobacterium bovis (strain ATCC BAA-935 / AF2122/97), this protein is Serine/threonine-protein kinase PknH (pknH).